The sequence spans 31 residues: uncharacterized protein (31 aa).

This is an uncharacterized protein from Saccharomyces cerevisiae (strain ATCC 204508 / S288c) (Baker's yeast).